We begin with the raw amino-acid sequence, 208 residues long: Putative 3-methyladenine DNA glycosylase (208 aa).

This sequence belongs to the DNA glycosylase MPG family.

The chain is Putative 3-methyladenine DNA glycosylase from Nitrobacter winogradskyi (strain ATCC 25391 / DSM 10237 / CIP 104748 / NCIMB 11846 / Nb-255).